The primary structure comprises 344 residues: uncharacterized protein (344 aa).

Basic and acidic residues predominate over residues 323–332 (KQQEQREQGR). Residues 323–344 (KQQEQREQGRRAAYLQQRGMER) are disordered.

This is an uncharacterized protein from Bacillus anthracis.